The primary structure comprises 412 residues: Pentatricopeptide repeat-containing protein At3g60980, mitochondrial (412 aa).

The transit peptide at Met1–Pro18 directs the protein to the mitochondrion. 9 PPR repeats span residues Thr69–Pro104, Asn105–His139, Ser143–Pro178, Asp179–Ala213, Val230–Leu264, Cys266–Lys296, Asp305–Leu339, Ile344–Tyr371, and Asp373–Glu407.

Belongs to the PPR family. P subfamily.

The protein resides in the mitochondrion. This Arabidopsis thaliana (Mouse-ear cress) protein is Pentatricopeptide repeat-containing protein At3g60980, mitochondrial.